The following is a 543-amino-acid chain: MLTLLHLLSAVALLVWGTHIVRTGVMRVFGARLRTVLSRSVEKKPLAFCAGIGVTALVQSSNATTLLVTSFVAQDLVALTPALVIVLGADVGTALMARILTFDLSWLSPLLIFIGVIFFLGRKQSRAGQLGRVGIGLGLILLALELIVQAVTPITQANGVQVIFASLTGDIMLDALIGAMFAIISYSSLAAVLLTATLTAAGIISFPVALCLVIGANLGSGLLAMLNNSAANAAARRVALGSLLFKLIGSLVILPFVHPLANLMDELSLPKSELVIYFHVFYNLVRCLAMVPFAELMARFCKRIIRDEPELDTHLKPKHLDVSALDTPTLALANAAREVLRIGDAMEQMMEGLKKVMHGEPREEKALRKLADDVNVLYTAIKLYLARMPKDELAAEESRRWAEIIEMALNLEQASDIIERMGSEIADKSLAARRAFSEEGLKELDALYDQLLSNLQLAMSVFFSGDVTSARRLRRSKHRFRILNRRYSHAHVDRLHQQNVQSIETSSLHLGLLGDMKRLNSLFCSVAYSVLEQPDQDEERGEY.

8 helical membrane-spanning segments follow: residues 1 to 21 (MLTL…THIV), 76 to 96 (LVAL…TALM), 99 to 119 (ILTF…VIFF), 134 to 154 (GIGL…VTPI), 175 to 195 (ALIG…VLLT), 196 to 216 (ATLT…VIGA), 238 to 258 (VALG…PFVH), and 274 to 294 (LVIY…VPFA).

It belongs to the YjbB family.

It localises to the cell inner membrane. It catalyses the reaction phosphate(in) = phosphate(out). Functionally, might be involved in phosphate export. In Salmonella typhimurium (strain LT2 / SGSC1412 / ATCC 700720), this protein is Putative inorganic phosphate export protein YjbB (yjbB).